The primary structure comprises 661 residues: DNA-directed RNA polymerase subunit beta' (661 aa).

Positions 69, 71, 87, and 90 each coordinate Zn(2+). Mg(2+) is bound by residues Asp489, Asp491, and Asp493.

Belongs to the RNA polymerase beta' chain family. RpoC1 subfamily. In plastids the minimal PEP RNA polymerase catalytic core is composed of four subunits: alpha, beta, beta', and beta''. When a (nuclear-encoded) sigma factor is associated with the core the holoenzyme is formed, which can initiate transcription. Requires Mg(2+) as cofactor. The cofactor is Zn(2+).

Its subcellular location is the plastid. The protein resides in the chloroplast. It catalyses the reaction RNA(n) + a ribonucleoside 5'-triphosphate = RNA(n+1) + diphosphate. DNA-dependent RNA polymerase catalyzes the transcription of DNA into RNA using the four ribonucleoside triphosphates as substrates. The sequence is that of DNA-directed RNA polymerase subunit beta' from Chaetosphaeridium globosum (Charophycean green alga).